A 393-amino-acid polypeptide reads, in one-letter code: Branched-chain amino acid aminotransferase 1, mitochondrial (393 aa).

A mitochondrion-targeting transit peptide spans 1–34; it reads MIHRGLWLHNLVQSYRVGSSSSSSTLFKLVYRYN. Arginine 138 is a binding site for pyridoxal 5'-phosphate. Residue lysine 240 is the Proton acceptor of the active site. Lysine 240 carries the post-translational modification N6-(pyridoxal phosphate)lysine. Glutamate 276 provides a ligand contact to pyridoxal 5'-phosphate.

This sequence belongs to the class-IV pyridoxal-phosphate-dependent aminotransferase family. The cofactor is pyridoxal 5'-phosphate. In terms of tissue distribution, expressed specifically in lupulin glands.

It is found in the mitochondrion. The catalysed reaction is L-isoleucine + 2-oxoglutarate = (S)-3-methyl-2-oxopentanoate + L-glutamate. It catalyses the reaction L-leucine + 2-oxoglutarate = 4-methyl-2-oxopentanoate + L-glutamate. The enzyme catalyses L-valine + 2-oxoglutarate = 3-methyl-2-oxobutanoate + L-glutamate. Its pathway is amino-acid biosynthesis; L-isoleucine biosynthesis; L-isoleucine from 2-oxobutanoate: step 4/4. The protein operates within amino-acid biosynthesis; L-leucine biosynthesis; L-leucine from 3-methyl-2-oxobutanoate: step 4/4. It participates in amino-acid biosynthesis; L-valine biosynthesis; L-valine from pyruvate: step 4/4. Converts 2-oxo acids to branched-chain amino acids (BCAA). Shows no kinetic preferences corresponding to anabolic or catabolic functions, but likely involved in BCAA catabolism. The sequence is that of Branched-chain amino acid aminotransferase 1, mitochondrial from Humulus lupulus (European hop).